A 242-amino-acid polypeptide reads, in one-letter code: Probable transcriptional regulatory protein EF_0663 (242 aa).

Polar residues predominate over residues 1–14 (MSGHSKWSNIQGRK). Residues 1–22 (MSGHSKWSNIQGRKNAQDAKRG) are disordered.

It belongs to the TACO1 family.

Its subcellular location is the cytoplasm. This Enterococcus faecalis (strain ATCC 700802 / V583) protein is Probable transcriptional regulatory protein EF_0663.